Here is a 217-residue protein sequence, read N- to C-terminus: GTP-binding protein Rit2 (217 aa).

GTP contacts are provided by residues 27–34, 74–78, and 133–136; these read GAGGVGKS, DTAGQ, and NKID.

It belongs to the small GTPase superfamily. Ras family. Interacts with AFDN, the C-terminal domain of RALGDS and RLF, but not with RIN1 and PIK3CA. RLF binds exclusively to the active GTP-bound form. Binds calmodulin. Interacts with PLXNB3.

The protein resides in the nucleus. Its subcellular location is the cell membrane. The catalysed reaction is GTP + H2O = GDP + phosphate + H(+). Alternates between an inactive form bound to GDP and an active form bound to GTP. Its function is as follows. Binds and exchanges GTP and GDP. This Rattus norvegicus (Rat) protein is GTP-binding protein Rit2 (Rit2).